A 301-amino-acid chain; its full sequence is Protoheme IX farnesyltransferase (301 aa).

Transmembrane regions (helical) follow at residues 30-50 (VISL…PKAI), 55-75 (IIVS…GGMI), 106-126 (AYAI…LANP), 127-147 (LTAL…SIWL), 152-172 (WWNI…GFAA), 177-197 (FTLL…GHFW), 233-253 (ALMV…YLIV), and 281-301 (FKLS…VKLI).

It belongs to the UbiA prenyltransferase family. Protoheme IX farnesyltransferase subfamily.

The protein localises to the cell membrane. It catalyses the reaction heme b + (2E,6E)-farnesyl diphosphate + H2O = Fe(II)-heme o + diphosphate. The protein operates within porphyrin-containing compound metabolism; heme O biosynthesis; heme O from protoheme: step 1/1. Functionally, converts heme B (protoheme IX) to heme O by substitution of the vinyl group on carbon 2 of heme B porphyrin ring with a hydroxyethyl farnesyl side group. The polypeptide is Protoheme IX farnesyltransferase (Sulfurisphaera tokodaii (strain DSM 16993 / JCM 10545 / NBRC 100140 / 7) (Sulfolobus tokodaii)).